We begin with the raw amino-acid sequence, 438 residues long: Probable 26S proteasome regulatory subunit rpn-6.1 (438 aa).

A compositionally biased stretch (basic and acidic residues) spans 1 to 10 (MRETSSREDT). A disordered region spans residues 1-30 (MRETSSREDTNNIGKAPEMSGGTIMDTMTS). The PCI domain occupies 239–408 (DFKTAFSYFY…GMLIVFEIAV (170 aa)).

Belongs to the proteasome subunit S9 family. In terms of assembly, component of the lid subcomplex of the 19S proteasome regulatory particle complex (also named PA700 complex). The 26S proteasome consists of a 20S proteasome core and two 19S regulatory subunits.

In terms of biological role, component of the lid subcomplex of the 26S proteasome, a multiprotein complex involved in the ATP-dependent degradation of ubiquitinated proteins. In the complex, rpn-6.1 is required for proteasome assembly. Plays a key role in increased proteasome activity in response to proteotoxic stress: induced by daf-16, promoting enhanced assembly of the 26S proteasome and higher proteasome activity, leading to extended lifespan. This chain is Probable 26S proteasome regulatory subunit rpn-6.1, found in Caenorhabditis elegans.